A 324-amino-acid chain; its full sequence is Olfactory receptor 8U3 (324 aa).

Topologically, residues Met1 to Ala25 are extracellular. The helical transmembrane segment at Pro26–Ile46 threads the bilayer. The Cytoplasmic portion of the chain corresponds to Thr47 to Arg54. A helical transmembrane segment spans residues Leu55 to Ser75. Residues Ala76–Thr99 lie on the Extracellular side of the membrane. A disulfide bridge connects residues Cys97 and Cys189. A helical membrane pass occupies residues Gln100 to Tyr120. At Asp121–Arg139 the chain is on the cytoplasmic side. Residues Val140–Thr160 form a helical membrane-spanning segment. Residues Val161–Glu196 are Extracellular-facing. The chain crosses the membrane as a helical span at residues Ile197 to Ser217. The Cytoplasmic portion of the chain corresponds to Tyr218–Ala237. The helical transmembrane segment at Ile238–Met258 threads the bilayer. At Tyr259–Asp271 the chain is on the extracellular side. N-linked (GlcNAc...) asparagine glycosylation occurs at Asn265. Residues Lys272–Leu292 form a helical membrane-spanning segment. Over Arg293–Tyr324 the chain is Cytoplasmic.

It belongs to the G-protein coupled receptor 1 family.

It is found in the cell membrane. In terms of biological role, odorant receptor. The protein is Olfactory receptor 8U3 of Homo sapiens (Human).